Consider the following 303-residue polypeptide: N-acetyl-D-glucosamine kinase (303 aa).

ATP contacts are provided by residues 4–11 (GFDIGGTK) and 133–140 (GVGGGLVL). Residues His157, Cys177, Cys179, and Cys184 each coordinate Zn(2+).

This sequence belongs to the ROK (NagC/XylR) family. NagK subfamily.

It catalyses the reaction N-acetyl-D-glucosamine + ATP = N-acetyl-D-glucosamine 6-phosphate + ADP + H(+). It functions in the pathway cell wall biogenesis; peptidoglycan recycling. Its function is as follows. Catalyzes the phosphorylation of N-acetyl-D-glucosamine (GlcNAc) derived from cell-wall degradation, yielding GlcNAc-6-P. This chain is N-acetyl-D-glucosamine kinase, found in Salmonella choleraesuis (strain SC-B67).